A 301-amino-acid polypeptide reads, in one-letter code: Protein RESTRICTED TEV MOVEMENT 3 (301 aa).

The 129-residue stretch at 6 to 134 folds into the MATH domain; sequence DKKITWTIKN…NGELKIVVEI (129 aa). Residues 235–289 adopt a coiled-coil conformation; it reads KLDWLEKKLYEVSEKKENEEASETGLQEMEEELKDMKQKCLEMEALVEKEKAKVS.

In terms of assembly, self-interacts. Interacts with RTM1.

In terms of biological role, required for the restriction of long-distance movement of the pathogenic tobacco etch virus (TEV) without causing a hypersensitive response or inducing systemic acquired resistance. This chain is Protein RESTRICTED TEV MOVEMENT 3 (RTM3), found in Arabidopsis thaliana (Mouse-ear cress).